The chain runs to 140 residues: Gonadotropin subunit beta-2 (140 aa).

Residues 1–23 (MGTPVKILVVLFSVIVLLAVAQS) form the signal peptide. 6 cysteine pairs are disulfide-bonded: Cys29–Cys77, Cys43–Cys92, Cys46–Cys130, Cys54–Cys108, Cys58–Cys110, and Cys113–Cys120. N-linked (GlcNAc...) asparagine glycosylation occurs at Asn33.

This sequence belongs to the glycoprotein hormones subunit beta family. Heterodimer of an alpha and a beta chain.

The protein resides in the secreted. Functionally, involved in gametogenesis and steroidogenesis. The sequence is that of Gonadotropin subunit beta-2 (cgbb) from Carassius auratus (Goldfish).